Reading from the N-terminus, the 458-residue chain is Histidine--tRNA ligase (458 aa).

Belongs to the class-II aminoacyl-tRNA synthetase family. Homodimer.

The protein localises to the cytoplasm. It carries out the reaction tRNA(His) + L-histidine + ATP = L-histidyl-tRNA(His) + AMP + diphosphate + H(+). The sequence is that of Histidine--tRNA ligase from Micrococcus luteus (strain ATCC 4698 / DSM 20030 / JCM 1464 / CCM 169 / CCUG 5858 / IAM 1056 / NBRC 3333 / NCIMB 9278 / NCTC 2665 / VKM Ac-2230) (Micrococcus lysodeikticus).